Reading from the N-terminus, the 406-residue chain is Lymphocyte transmembrane adapter 1 (406 aa).

Residues 1–25 (MYTTPAPPEITRRSSEPSTQQGTLG) form a disordered region. The Extracellular portion of the chain corresponds to 1-33 (MYTTPAPPEITRRSSEPSTQQGTLGSLEGEKGH). Residues 34-54 (LLFPGFVVLVTIFLVVIVTCI) traverse the membrane as a helical; Signal-anchor for type III membrane protein segment. Residues 55-406 (LWSRKKQKKR…LATETSGEEV (352 aa)) lie on the Cytoplasmic side of the membrane. A disordered region spans residues 109-131 (ESLLSRASDSPEPEVPQASGSLQ). Tyr184 bears the Phosphotyrosine mark. The segment at 219-258 (AEGGHAGCGKATDRTGVWAPGLQGSNSLSEGDDSSQSSND) is disordered. Residues 242–258 (GSNSLSEGDDSSQSSND) show a composition bias toward low complexity. A phosphotyrosine mark is found at Tyr259, Tyr285, and Tyr352. The tract at residues 358–406 (PELEGKDWKQGPGTWHPSDERTPSDQAGKFCEAVYPAGSLATETSGEEV) is disordered.

When phosphorylated, interacts with GRB2, PIK3R1 and GRAP2. Phosphorylated on tyrosines upon TCR or BCR activation; which leads to the recruitment of GRB2, PIK3R1 and GRAP2.

The protein localises to the cell membrane. Functionally, negatively regulates TCR (T-cell antigen receptor)-mediated signaling in T-cells and BCR (B-cell antigen receptor)-mediated signaling in B-cells. This chain is Lymphocyte transmembrane adapter 1 (Lax1), found in Rattus norvegicus (Rat).